The primary structure comprises 351 residues: Epoxyqueuosine reductase (351 aa).

Residue aspartate 131 is the Proton donor of the active site. The 29-residue stretch at 177–205 (EDQPVDYGCGSCTRCVDFCPTKALLGDGR) folds into the 4Fe-4S ferredoxin-type domain. Positions 185, 188, 191, 195, 211, 237, 240, and 244 each coordinate [4Fe-4S] cluster.

The protein belongs to the QueG family. In terms of assembly, monomer. Cob(II)alamin serves as cofactor. The cofactor is [4Fe-4S] cluster.

The protein resides in the cytoplasm. The enzyme catalyses epoxyqueuosine(34) in tRNA + AH2 = queuosine(34) in tRNA + A + H2O. Its pathway is tRNA modification; tRNA-queuosine biosynthesis. Catalyzes the conversion of epoxyqueuosine (oQ) to queuosine (Q), which is a hypermodified base found in the wobble positions of tRNA(Asp), tRNA(Asn), tRNA(His) and tRNA(Tyr). The polypeptide is Epoxyqueuosine reductase (Lactococcus garvieae (strain Lg2) (Enterococcus seriolicida)).